A 258-amino-acid chain; its full sequence is Imidazole glycerol phosphate synthase subunit HisF (258 aa).

Residues Asp12 and Asp131 contribute to the active site.

The protein belongs to the HisA/HisF family. Heterodimer of HisH and HisF.

The protein resides in the cytoplasm. The enzyme catalyses 5-[(5-phospho-1-deoxy-D-ribulos-1-ylimino)methylamino]-1-(5-phospho-beta-D-ribosyl)imidazole-4-carboxamide + L-glutamine = D-erythro-1-(imidazol-4-yl)glycerol 3-phosphate + 5-amino-1-(5-phospho-beta-D-ribosyl)imidazole-4-carboxamide + L-glutamate + H(+). It functions in the pathway amino-acid biosynthesis; L-histidine biosynthesis; L-histidine from 5-phospho-alpha-D-ribose 1-diphosphate: step 5/9. In terms of biological role, IGPS catalyzes the conversion of PRFAR and glutamine to IGP, AICAR and glutamate. The HisF subunit catalyzes the cyclization activity that produces IGP and AICAR from PRFAR using the ammonia provided by the HisH subunit. The polypeptide is Imidazole glycerol phosphate synthase subunit HisF (Corynebacterium diphtheriae (strain ATCC 700971 / NCTC 13129 / Biotype gravis)).